A 200-amino-acid chain; its full sequence is Probable GTP-binding protein EngB (200 aa).

The region spanning 24–199 (EGAEVAFAGR…RGVIGGWLGL (176 aa)) is the EngB-type G domain. Residues 32-39 (GRSNAGKS), 59-63 (GRTQQ), 77-80 (DLPG), 144-147 (TKAD), and 178-180 (FSG) each bind GTP. Mg(2+) contacts are provided by S39 and T61.

It belongs to the TRAFAC class TrmE-Era-EngA-EngB-Septin-like GTPase superfamily. EngB GTPase family. Mg(2+) serves as cofactor.

In terms of biological role, necessary for normal cell division and for the maintenance of normal septation. The chain is Probable GTP-binding protein EngB from Stenotrophomonas maltophilia (strain K279a).